Consider the following 402-residue polypeptide: Arginine deiminase (402 aa).

Cys392 (amidino-cysteine intermediate) is an active-site residue.

The protein belongs to the arginine deiminase family.

The protein resides in the cytoplasm. The catalysed reaction is L-arginine + H2O = L-citrulline + NH4(+). It functions in the pathway amino-acid degradation; L-arginine degradation via ADI pathway; carbamoyl phosphate from L-arginine: step 1/2. The protein is Arginine deiminase of Mycobacterium avium (strain 104).